The following is a 414-amino-acid chain: Sec-independent protein translocase protein TatC (414 aa).

The interval 1–21 (MTQSTSVSKGGRVSRKAKKNP) is disordered. 6 helical membrane passes run 45 to 65 (IAVTTIIGFIWYEHGIPAWAI), 119 to 139 (GGLAGLVMACPIWLIEIWRFI), 157 to 177 (IAGFLFVLGVVAAYLVLPMGL), 200 to 220 (FVIALILVFGLSFEVPLFTAM), 238 to 258 (IMIVVIFIFAAIATPGQDPIS), and 259 to 279 (MLVLALTLVVLMELALQFTRI). A disordered region spans residues 315–414 (IYDGDHKGIA…IQSSSFDDVL (100 aa)). The segment covering 323–336 (IAGGGDAHPAGGSG) has biased composition (gly residues). Residues 345 to 357 (TAPTRAPSASESP) are compositionally biased toward low complexity. The span at 403 to 414 (DTIQSSSFDDVL) shows a compositional bias: polar residues.

It belongs to the TatC family. As to quaternary structure, the Tat system comprises two distinct complexes: a TatABC complex, containing multiple copies of TatA, TatB and TatC subunits, and a separate TatA complex, containing only TatA subunits. Substrates initially bind to the TatABC complex, which probably triggers association of the separate TatA complex to form the active translocon.

Its subcellular location is the cell membrane. In terms of biological role, part of the twin-arginine translocation (Tat) system that transports large folded proteins containing a characteristic twin-arginine motif in their signal peptide across membranes. Together with TatB, TatC is part of a receptor directly interacting with Tat signal peptides. This chain is Sec-independent protein translocase protein TatC, found in Corynebacterium kroppenstedtii (strain DSM 44385 / JCM 11950 / CIP 105744 / CCUG 35717).